Here is a 147-residue protein sequence, read N- to C-terminus: uncharacterized protein (147 aa).

A CMP/dCMP-type deaminase domain is found at 4 to 120 (KWAKRFFQMA…EQTEDFLSRW (117 aa)). His67 contributes to the Zn(2+) binding site. Glu69 functions as the Proton donor in the catalytic mechanism. Cys92 and Cys95 together coordinate Zn(2+).

The protein belongs to the cytidine and deoxycytidylate deaminase family. Zn(2+) is required as a cofactor.

This is an uncharacterized protein from Aliivibrio fischeri (Vibrio fischeri).